The primary structure comprises 256 residues: PGL/p-HBAD biosynthesis glycosyltransferase Mb2981 (256 aa).

This sequence belongs to the glycosyltransferase 2 family.

Functionally, involved in glycosylation steps downstream of mono-O-methyl-glycosyl-p-hydroxybenzoic acid derivative (p-HBAD I) and 2-O-methyl-rhamnosyl-phenolphthiocerol dimycocerosate (mycoside B) during the p-hydroxybenzoic acid derivatives (p-HBAD) and glycosylated phenolphthiocerol dimycocerosates (PGL) biosynthesis. In Mycobacterium bovis (strain ATCC BAA-935 / AF2122/97), this protein is PGL/p-HBAD biosynthesis glycosyltransferase Mb2981.